A 100-amino-acid chain; its full sequence is Co-chaperonin GroES (100 aa).

This sequence belongs to the GroES chaperonin family. In terms of assembly, heptamer of 7 subunits arranged in a ring. Interacts with the chaperonin GroEL.

The protein localises to the cytoplasm. Its function is as follows. Together with the chaperonin GroEL, plays an essential role in assisting protein folding. The GroEL-GroES system forms a nano-cage that allows encapsulation of the non-native substrate proteins and provides a physical environment optimized to promote and accelerate protein folding. GroES binds to the apical surface of the GroEL ring, thereby capping the opening of the GroEL channel. This is Co-chaperonin GroES from Mycolicibacterium smegmatis (strain ATCC 700084 / mc(2)155) (Mycobacterium smegmatis).